Here is a 299-residue protein sequence, read N- to C-terminus: F-actin-capping protein subunit alpha-3 (299 aa).

A Phosphoserine modification is found at Ser-290.

This sequence belongs to the F-actin-capping protein alpha subunit family. Component of the F-actin capping complex, composed of a heterodimer of an alpha and a beta subunit. Component of the WASH complex, composed of F-actin-capping protein subunit alpha (CAPZA1, CAPZA2 or CAPZA3), F-actin-capping protein subunit beta (CAPZB), WASH (WASHC1, WASH2P, WASH3P, WASH4P, WASH5P or WASH6P), WASHC2 (WASHC2A or WASHC2C), WASHC3, WASHC4 and WASHC5. Expressed exclusively in testis and sperm. Highest expression is found in the neck region of ejaculated sperm with lower levels found in the tail and postacrosome region.

Its subcellular location is the cytoplasm. It is found in the cytoskeleton. Its function is as follows. F-actin-capping proteins bind in a Ca(2+)-independent manner to the fast growing ends of actin filaments (barbed end) thereby blocking the exchange of subunits at these ends. Unlike other capping proteins (such as gelsolin and severin), these proteins do not sever actin filaments. May play a role in the morphogenesis of spermatid. This is F-actin-capping protein subunit alpha-3 (CAPZA3) from Homo sapiens (Human).